The chain runs to 203 residues: Holliday junction branch migration complex subunit RuvA (203 aa).

Residues 1–64 form a domain I region; the sequence is MIGRLRGIIL…EDAQLLYGFN (64 aa). The domain II stretch occupies residues 65–142; it reads NKQERMLFRE…KGLHGDLFTP (78 aa). The interval 143 to 154 is flexible linker; it reads AADLVLTSPNGP. The interval 155-203 is domain III; it reads TSDDAEQEAVAALVALGYKPQEASRMVSKIAKPDANSETLIREALRAAL.

Belongs to the RuvA family. As to quaternary structure, homotetramer. Forms an RuvA(8)-RuvB(12)-Holliday junction (HJ) complex. HJ DNA is sandwiched between 2 RuvA tetramers; dsDNA enters through RuvA and exits via RuvB. An RuvB hexamer assembles on each DNA strand where it exits the tetramer. Each RuvB hexamer is contacted by two RuvA subunits (via domain III) on 2 adjacent RuvB subunits; this complex drives branch migration. In the full resolvosome a probable DNA-RuvA(4)-RuvB(12)-RuvC(2) complex forms which resolves the HJ.

The protein localises to the cytoplasm. Its function is as follows. The RuvA-RuvB-RuvC complex processes Holliday junction (HJ) DNA during genetic recombination and DNA repair, while the RuvA-RuvB complex plays an important role in the rescue of blocked DNA replication forks via replication fork reversal (RFR). RuvA specifically binds to HJ cruciform DNA, conferring on it an open structure. The RuvB hexamer acts as an ATP-dependent pump, pulling dsDNA into and through the RuvAB complex. HJ branch migration allows RuvC to scan DNA until it finds its consensus sequence, where it cleaves and resolves the cruciform DNA. The protein is Holliday junction branch migration complex subunit RuvA of Enterobacter sp. (strain 638).